An 825-amino-acid chain; its full sequence is Extracellular exo-alpha-L-arabinofuranosidase (825 aa).

An N-terminal signal peptide occupies residues 1 to 29 (MSRIRWRYGTAATALLVAAGLVPTATAHA). Glutamate 58 provides a ligand contact to alpha-L-arabinofuranose. Positions 70–215 (AELVQNRSFE…ALDMVSLFPR (146 aa)) constitute a CBM-cenC domain. Alpha-L-arabinofuranose-binding positions include cysteine 247 and 379–380 (NE). The Proton donor/acceptor role is filled by glutamate 380.

The protein belongs to the glycosyl hydrolase 51 family.

Its subcellular location is the secreted. It catalyses the reaction Hydrolysis of terminal non-reducing alpha-L-arabinofuranoside residues in alpha-L-arabinosides.. Its function is as follows. Involved in the degradation of arabinan and is a key enzyme in the complete degradation of the plant cell wall. Catalyzes the cleavage of terminal alpha-L-arabinofuranosyl residues of arabinan present in the arabinofuranosyl polysaccharides or oligosaccharides. It cannot act on other arabinose-containing polysaccharides and arabinoxylo-oligosaccharides. It leaves most of the polymer intact, including most of the main-chain residues and the arabinose side chains. It acts preferentially on the linear alpha-(1-&gt;2)-linked arabinofuranobiosides and alpha-(1-&gt;3)-linked arabinofuranobiosides, and is much less effective on alpha-(1-&gt;5)-linked arabinofuranobiosides. It also hydrolyzes the terminal alpha-(1-&gt;3)-linked arabinofuranotriosides in preference to the alpha-(1-&gt;5)-linked arabinofuranotriosides. The polypeptide is Extracellular exo-alpha-L-arabinofuranosidase (Streptomyces chartreusis).